The following is a 119-amino-acid chain: Holo-[acyl-carrier-protein] synthase (119 aa).

Positions 5 and 51 each coordinate Mg(2+).

This sequence belongs to the P-Pant transferase superfamily. AcpS family. It depends on Mg(2+) as a cofactor.

It is found in the cytoplasm. It carries out the reaction apo-[ACP] + CoA = holo-[ACP] + adenosine 3',5'-bisphosphate + H(+). In terms of biological role, transfers the 4'-phosphopantetheine moiety from coenzyme A to a Ser of acyl-carrier-protein. The sequence is that of Holo-[acyl-carrier-protein] synthase from Helicobacter pylori (strain J99 / ATCC 700824) (Campylobacter pylori J99).